Here is a 331-residue protein sequence, read N- to C-terminus: Quinone oxidoreductase (331 aa).

The residue at position 2 (alanine 2) is an N-acetylalanine. Lysine 23 carries the post-translational modification N6-acetyllysine. The residue at position 35 (serine 35) is a Phosphoserine. NADP(+) contacts are provided by residues tyrosine 53, 158–161 (SGGV), and glycine 181. At lysine 186 the chain carries N6-acetyllysine. NADP(+) is bound by residues histidine 200, asparagine 231, 248–251 (VGCR), and 271–273 (VSL). Position 298 is an N6-succinyllysine (lysine 298).

This sequence belongs to the zinc-containing alcohol dehydrogenase family. Quinone oxidoreductase subfamily. Homotetramer.

It is found in the cytoplasm. The catalysed reaction is 2 a quinone + NADPH + H(+) = 2 a 1,4-benzosemiquinone + NADP(+). Its function is as follows. Does not have alcohol dehydrogenase activity. Binds NADP and acts through a one-electron transfer process. Orthoquinones, such as 1,2-naphthoquinone or 9,10-phenanthrenequinone, are the best substrates (in vitro). May act in the detoxification of xenobiotics. Interacts with (AU)-rich elements (ARE) in the 3'-UTR of target mRNA species and enhances their stability. NADPH binding interferes with mRNA binding. The protein is Quinone oxidoreductase (Cryz) of Mus musculus (Mouse).